A 461-amino-acid polypeptide reads, in one-letter code: MLKIFNTLTRQKEEFKPIHAGEVGMYVCGITVYDLCHIGHGRTFVAFDVVARYLRFLGYKLKYVRNITDIDDKIIKRANENGESFVALVDRMIAEMHKDFDALNILRPDMEPRATHHIAEIIELTEQLIAKGHAYVADNGDVMFDVPTDPTYGVLSRQDLDQLQAGARVDVVDDKRNPMDFVLWKMSKEGEPSWPSPWGAGRPGWHIECSAMNCKQLGNHFDIHGGGSDLMFPHHENEIAQSTCAHDGLYVNYWMHSGMVMVDREKMSKSLGNFFTVRDVLKYYDAETVRYFLMSGHYRSQLNYSEENLKQARAALERLYTALRGTDKTVAPAGGEAFEARFIEAMDDDFNTPEAYSVLFDMAREVNRLKAEDMAAANAMASHLRKLSAVLGLLEQEPEAFLQSGAQADDSEVAEIEALIQQRLDARKAKDWAAADAARDRLNEMGIVLEDGPQGTTWRRK.

C28 contacts Zn(2+). A 'HIGH' region motif is present at residues 30–40 (ITVYDLCHIGH). Zn(2+)-binding residues include C209, H234, and E238. Positions 266–270 (KMSKS) match the 'KMSKS' region motif. K269 lines the ATP pocket.

This sequence belongs to the class-I aminoacyl-tRNA synthetase family. In terms of assembly, monomer. Requires Zn(2+) as cofactor.

It localises to the cytoplasm. The catalysed reaction is tRNA(Cys) + L-cysteine + ATP = L-cysteinyl-tRNA(Cys) + AMP + diphosphate. This chain is Cysteine--tRNA ligase, found in Escherichia coli O6:K15:H31 (strain 536 / UPEC).